The primary structure comprises 285 residues: tRNA U34 carboxymethyltransferase (285 aa).

Residues Lys56, Trp70, Lys75, Gly94, 143 to 144 (VE), Tyr163, and Arg278 each bind carboxy-S-adenosyl-L-methionine.

The protein belongs to the class I-like SAM-binding methyltransferase superfamily. CmoB family. Homotetramer.

It carries out the reaction carboxy-S-adenosyl-L-methionine + 5-hydroxyuridine(34) in tRNA = 5-carboxymethoxyuridine(34) in tRNA + S-adenosyl-L-homocysteine + H(+). Functionally, catalyzes carboxymethyl transfer from carboxy-S-adenosyl-L-methionine (Cx-SAM) to 5-hydroxyuridine (ho5U) to form 5-carboxymethoxyuridine (cmo5U) at position 34 in tRNAs. The chain is tRNA U34 carboxymethyltransferase from Campylobacter hominis (strain ATCC BAA-381 / DSM 21671 / CCUG 45161 / LMG 19568 / NCTC 13146 / CH001A).